A 426-amino-acid polypeptide reads, in one-letter code: Histidine--tRNA ligase (426 aa).

It belongs to the class-II aminoacyl-tRNA synthetase family.

Its subcellular location is the cytoplasm. It carries out the reaction tRNA(His) + L-histidine + ATP = L-histidyl-tRNA(His) + AMP + diphosphate + H(+). The protein is Histidine--tRNA ligase of Saccharolobus islandicus (strain M.16.27) (Sulfolobus islandicus).